Consider the following 447-residue polypeptide: Probable glycine dehydrogenase (decarboxylating) subunit 1 (447 aa).

This sequence belongs to the GcvP family. N-terminal subunit subfamily. As to quaternary structure, the glycine cleavage system is composed of four proteins: P, T, L and H. In this organism, the P 'protein' is a heterodimer of two subunits.

It carries out the reaction N(6)-[(R)-lipoyl]-L-lysyl-[glycine-cleavage complex H protein] + glycine + H(+) = N(6)-[(R)-S(8)-aminomethyldihydrolipoyl]-L-lysyl-[glycine-cleavage complex H protein] + CO2. The glycine cleavage system catalyzes the degradation of glycine. The P protein binds the alpha-amino group of glycine through its pyridoxal phosphate cofactor; CO(2) is released and the remaining methylamine moiety is then transferred to the lipoamide cofactor of the H protein. The chain is Probable glycine dehydrogenase (decarboxylating) subunit 1 from Halalkalibacterium halodurans (strain ATCC BAA-125 / DSM 18197 / FERM 7344 / JCM 9153 / C-125) (Bacillus halodurans).